We begin with the raw amino-acid sequence, 155 residues long: Small ribosomal subunit protein uS7 (155 aa).

This sequence belongs to the universal ribosomal protein uS7 family. As to quaternary structure, part of the 30S ribosomal subunit. Contacts proteins S9 and S11.

Functionally, one of the primary rRNA binding proteins, it binds directly to 16S rRNA where it nucleates assembly of the head domain of the 30S subunit. Is located at the subunit interface close to the decoding center, probably blocks exit of the E-site tRNA. In Chlorobium limicola (strain DSM 245 / NBRC 103803 / 6330), this protein is Small ribosomal subunit protein uS7.